Consider the following 211-residue polypeptide: Shikimate kinase (211 aa).

The segment covering 1 to 13 (MNASANLCAASAN) has biased composition (low complexity). A disordered region spans residues 1 to 24 (MNASANLCAASANDPQPGDQEAAH). Residue 50–55 (GAGKTT) participates in ATP binding. Thr-54 contacts Mg(2+). 3 residues coordinate substrate: Asp-72, Arg-96, and Gly-118. Position 156 (Arg-156) interacts with ATP. Residue Arg-175 participates in substrate binding.

It belongs to the shikimate kinase family. In terms of assembly, monomer. Mg(2+) serves as cofactor.

It localises to the cytoplasm. The catalysed reaction is shikimate + ATP = 3-phosphoshikimate + ADP + H(+). It functions in the pathway metabolic intermediate biosynthesis; chorismate biosynthesis; chorismate from D-erythrose 4-phosphate and phosphoenolpyruvate: step 5/7. Its function is as follows. Catalyzes the specific phosphorylation of the 3-hydroxyl group of shikimic acid using ATP as a cosubstrate. In Bordetella parapertussis (strain 12822 / ATCC BAA-587 / NCTC 13253), this protein is Shikimate kinase.